The following is a 274-amino-acid chain: MRYIGINVNTGKDVEGRLLKKIVEAIEDNCKDVEVKIYKDSIGLEKKETENLEVVIVLGGDGTILKASKYLAKYNVPILGINIGNLGFLTETESSNFIFSIRNYFKGKYYIEERNMVQCTTEYKGIKKEFHGLNDIVVTKGDVGKTAKYDLYIDGNFYTKLSSDGVIVSTSTGSTAYSLSAGGPIIYPTLDALCLTPICGHSLRIRSIVLNHKSIIKIISQSENVILTVDGEEINFLENVKEFLITSSPYKCKLIKLEGEHRDYYSILRNKLYL.

The active-site Proton acceptor is Asp61. NAD(+)-binding positions include 61–62 (DG), Lys66, 134–135 (ND), Lys145, Asp164, and 175–180 (TAYSLS).

Belongs to the NAD kinase family. A divalent metal cation is required as a cofactor.

Its subcellular location is the cytoplasm. The catalysed reaction is NAD(+) + ATP = ADP + NADP(+) + H(+). Involved in the regulation of the intracellular balance of NAD and NADP, and is a key enzyme in the biosynthesis of NADP. Catalyzes specifically the phosphorylation on 2'-hydroxyl of the adenosine moiety of NAD to yield NADP. The polypeptide is NAD kinase (Clostridium tetani (strain Massachusetts / E88)).